Reading from the N-terminus, the 255-residue chain is MTVRVRVIPCLDVADGRVVKGVNFVDLRDAGDPVEAARAYDAAGADELCFLDISASHQGRGTLLDLVSRTAEVCFMPLTVGGGVRSAEDARALLLAGADKVAVNSAAVARPELVADIADRFGSQCAVGSIDARRVEDGRWEIFTHGGRKPTGIDAVEHAVRLATLGAGELLVTSMDRDGTRDGYDLALTRAIADAVSVPVIASGGVGNLDHLVAGVIEGGASAVLAASIFHFGEATIAEAHARLAAAGLPVRSPI.

Active-site residues include Asp-12 and Asp-131.

Belongs to the HisA/HisF family. As to quaternary structure, heterodimer of HisH and HisF.

Its subcellular location is the cytoplasm. The catalysed reaction is 5-[(5-phospho-1-deoxy-D-ribulos-1-ylimino)methylamino]-1-(5-phospho-beta-D-ribosyl)imidazole-4-carboxamide + L-glutamine = D-erythro-1-(imidazol-4-yl)glycerol 3-phosphate + 5-amino-1-(5-phospho-beta-D-ribosyl)imidazole-4-carboxamide + L-glutamate + H(+). It participates in amino-acid biosynthesis; L-histidine biosynthesis; L-histidine from 5-phospho-alpha-D-ribose 1-diphosphate: step 5/9. Its function is as follows. IGPS catalyzes the conversion of PRFAR and glutamine to IGP, AICAR and glutamate. The HisF subunit catalyzes the cyclization activity that produces IGP and AICAR from PRFAR using the ammonia provided by the HisH subunit. The protein is Imidazole glycerol phosphate synthase subunit HisF of Sphingopyxis alaskensis (strain DSM 13593 / LMG 18877 / RB2256) (Sphingomonas alaskensis).